A 649-amino-acid polypeptide reads, in one-letter code: Threonine--tRNA ligase (649 aa).

In terms of domain architecture, TGS spans M1–T60. Positions D248–P544 are catalytic. 3 residues coordinate Zn(2+): C341, H392, and H521.

It belongs to the class-II aminoacyl-tRNA synthetase family. Homodimer. Requires Zn(2+) as cofactor.

The protein localises to the cytoplasm. The enzyme catalyses tRNA(Thr) + L-threonine + ATP = L-threonyl-tRNA(Thr) + AMP + diphosphate + H(+). Catalyzes the attachment of threonine to tRNA(Thr) in a two-step reaction: L-threonine is first activated by ATP to form Thr-AMP and then transferred to the acceptor end of tRNA(Thr). Also edits incorrectly charged L-seryl-tRNA(Thr). The protein is Threonine--tRNA ligase of Deinococcus radiodurans (strain ATCC 13939 / DSM 20539 / JCM 16871 / CCUG 27074 / LMG 4051 / NBRC 15346 / NCIMB 9279 / VKM B-1422 / R1).